The sequence spans 152 residues: UPF0178 protein SAS0646 (152 aa).

This sequence belongs to the UPF0178 family.

The sequence is that of UPF0178 protein SAS0646 from Staphylococcus aureus (strain MSSA476).